The following is a 176-amino-acid chain: Jacalin-related lectin 19 (176 aa).

The 143-residue stretch at 12-154 (TVFVGPWGGN…LDSIGFHLSR (143 aa)) folds into the Jacalin-type lectin domain.

Belongs to the jacalin lectin family.

The protein is Jacalin-related lectin 19 (JAL19) of Arabidopsis thaliana (Mouse-ear cress).